Consider the following 208-residue polypeptide: Protein-L-isoaspartate O-methyltransferase (208 aa).

Residue serine 59 is part of the active site.

It belongs to the methyltransferase superfamily. L-isoaspartyl/D-aspartyl protein methyltransferase family.

The protein resides in the cytoplasm. The catalysed reaction is [protein]-L-isoaspartate + S-adenosyl-L-methionine = [protein]-L-isoaspartate alpha-methyl ester + S-adenosyl-L-homocysteine. Functionally, catalyzes the methyl esterification of L-isoaspartyl residues in peptides and proteins that result from spontaneous decomposition of normal L-aspartyl and L-asparaginyl residues. It plays a role in the repair and/or degradation of damaged proteins. The polypeptide is Protein-L-isoaspartate O-methyltransferase (Pectobacterium atrosepticum (strain SCRI 1043 / ATCC BAA-672) (Erwinia carotovora subsp. atroseptica)).